The following is a 322-amino-acid chain: Lactamase-like protein nscB (322 aa).

4 residues coordinate Zn(2+): His97, His99, Asp101, and His102. Asp101 (proton donor/acceptor) is an active-site residue.

It belongs to the metallo-beta-lactamase superfamily. Zn(2+) serves as cofactor.

The protein operates within secondary metabolite biosynthesis. Functionally, lactamase-like protein; part of the gene cluster that mediates the biosynthesis of neosartoricin B, a prenylated anthracenone that probably exhibits T-cell antiproliferative activity, suggestive of a physiological role as an immunosuppressive agent. The non-reducing polyketide synthase nscA probably synthesizes and cyclizes the decaketide backbone. The hydrolase nscB then mediates the product release through hydrolysis followed by spontaneous decarboxylation. The prenyltransferase nscD catalyzes the addition of the dimethylallyl group to the aromatic C5. The FAD-dependent monooxygenase nscC is then responsible for the stereospecific hydroxylation at C2. Neosartoricin B can be converted into two additional compounds neosartoricins C and D. Neosartoricin C is a spirocyclic compound that is cyclized through the attack of C3 hydroxyl on C14, followed by dehydration. On the other hand, neosartoricin D is a further cyclized compound in which attack of C2 on C14 in neosartoricin C results in the formation of the acetal-containing dioxabicyclo-octanone ring. Both of these compounds are novel and possibly represent related metabolites of the gene cluster. This chain is Lactamase-like protein nscB, found in Trichophyton rubrum (strain ATCC MYA-4607 / CBS 118892) (Athlete's foot fungus).